The chain runs to 64 residues: LTCNTCAFKTCANSETCAAGKNICYQRKWNEHHGERIERKCVANCPELGSHDTSLLCCRIPDCN.

5 disulfides stabilise this stretch: C3–C24, C6–C11, C17–C41, C45–C57, and C58–C63.

Expressed by the venom gland.

Its subcellular location is the secreted. In terms of biological role, produces peripheral paralysis by blocking neuromuscular transmission at the postsynaptic site. Binds to the muscular nicotinic acetylcholine receptor (nAChR). The chain is Frontoxin V from Micrurus frontalis (Coral snake).